A 286-amino-acid polypeptide reads, in one-letter code: 33 kDa chaperonin (286 aa).

Cystine bridges form between Cys-225/Cys-227 and Cys-258/Cys-261.

This sequence belongs to the HSP33 family. Under oxidizing conditions two disulfide bonds are formed involving the reactive cysteines. Under reducing conditions zinc is bound to the reactive cysteines and the protein is inactive.

The protein resides in the cytoplasm. Redox regulated molecular chaperone. Protects both thermally unfolding and oxidatively damaged proteins from irreversible aggregation. Plays an important role in the bacterial defense system toward oxidative stress. In Shewanella putrefaciens (strain CN-32 / ATCC BAA-453), this protein is 33 kDa chaperonin.